A 148-amino-acid chain; its full sequence is Transcriptional regulator MraZ (148 aa).

SpoVT-AbrB domains lie at 5-51 and 80-123; these read AAAL…PSPA and ARTE…SEAG.

Belongs to the MraZ family. As to quaternary structure, forms oligomers.

The protein resides in the cytoplasm. It is found in the nucleoid. This Dechloromonas aromatica (strain RCB) protein is Transcriptional regulator MraZ.